The chain runs to 406 residues: MTPGGQAQIGNVDLVKQLNSAAVYRLIDQYGPISRIQIAEQSQLAPASVTKITRQLIERGLIKEVDQQASTGGRRAISIVTETRNFHAIGVRLGRHDATITLFDLSSKVLAEEHYPLPERTQQTLEHALLNAIAQFIDSYQRKLRELIAISVILPGLVDPDSGKIHYMPHIQVENWGLVEALEERFKVTCFVGHDIRSLALAEHYFGASQDCEDSILVRVHRGTGAGIISNGRIFIGRNGNVGEIGHIQVEPLGERCHCGNFGCLETIAANAAIEQRVLNLLKQGYQSRVPLDDCTIKTICKAANKGDSLASEVIEYVGRHLGKTIAIAINLFNPQKIVIAGEITEADKVLLPAIESCINTQALKAFRTNLPVVRSELDHRSAIGAFALVKRAMLNGILLQHLLEN.

Positions 35–44 (RIQIAEQSQL) form a DNA-binding region, H-T-H motif.

This sequence belongs to the ROK (NagC/XylR) family.

In terms of biological role, acts as a repressor of the nagEBACD operon and acts both as an activator and a repressor for the transcription of the glmSU operon. The polypeptide is N-acetylglucosamine repressor (nagC) (Escherichia coli O157:H7).